The following is a 181-amino-acid chain: Adenylate kinase (181 aa).

10-15 (GAGKGT) lines the ATP pocket. The tract at residues 30-59 (STGDLFRANISQGTELGKQAQEYMDAGKLV) is NMP. Residues Thr31, Arg36, 57-59 (KLV), 85-88 (GFPR), and Gln92 contribute to the AMP site. Positions 126–132 (SRGRNDD) are LID. Arg127 is an ATP binding site. Residues Arg129 and Arg140 each contribute to the AMP site. Gly166 is an ATP binding site.

Belongs to the adenylate kinase family. Monomer.

The protein resides in the cytoplasm. The catalysed reaction is AMP + ATP = 2 ADP. Its pathway is purine metabolism; AMP biosynthesis via salvage pathway; AMP from ADP: step 1/1. In terms of biological role, catalyzes the reversible transfer of the terminal phosphate group between ATP and AMP. Plays an important role in cellular energy homeostasis and in adenine nucleotide metabolism. In Corynebacterium urealyticum (strain ATCC 43042 / DSM 7109), this protein is Adenylate kinase.